Reading from the N-terminus, the 435-residue chain is Glucan 1,3-beta-glucosidase (435 aa).

Positions M1–A30 are cleaved as a signal peptide. The active-site Proton donor is the E222. Intrachain disulfides connect C306–C432 and C331–C357. E323 serves as the catalytic Nucleophile.

Belongs to the glycosyl hydrolase 5 (cellulase A) family.

The protein localises to the secreted. It catalyses the reaction Successive hydrolysis of beta-D-glucose units from the non-reducing ends of (1-&gt;3)-beta-D-glucans, releasing alpha-glucose.. Its function is as follows. Beta-glucanases participate in the metabolism of beta-glucan, the main structural component of the cell wall. It could also function biosynthetically as a transglycosylase. This chain is Glucan 1,3-beta-glucosidase, found in Pichia angusta (Yeast).